The following is a 585-amino-acid chain: Chaperonin GroEL, chloroplastic (585 aa).

Residues 55–58 (TLGP), 113–117 (DGTTT), Gly-442, 507–509 (NAA), and Asp-523 contribute to the ATP site.

It belongs to the chaperonin (HSP60) family. In terms of assembly, forms a cylinder of 14 subunits composed of two heptameric rings stacked back-to-back. Interacts with the co-chaperonin GroES.

Its subcellular location is the plastid. The protein resides in the chloroplast. It carries out the reaction ATP + H2O + a folded polypeptide = ADP + phosphate + an unfolded polypeptide.. Together with its co-chaperonin GroES, plays an essential role in assisting protein folding. The GroEL-GroES system forms a nano-cage that allows encapsulation of the non-native substrate proteins and provides a physical environment optimized to promote and accelerate protein folding. This Pyrenomonas salina protein is Chaperonin GroEL, chloroplastic.